A 597-amino-acid chain; its full sequence is Glutamine--fructose-6-phosphate aminotransferase [isomerizing] (597 aa).

C2 serves as the catalytic Nucleophile; for GATase activity. The region spanning 2 to 218 is the Glutamine amidotransferase type-2 domain; sequence CGIVGYIGDS…ENSVGQISLE (217 aa). SIS domains follow at residues 276–416 and 449–587; these read IDPE…QLGT and LSKR…VDHP. The For Fru-6P isomerization activity role is filled by K592.

As to quaternary structure, homodimer.

It localises to the cytoplasm. The catalysed reaction is D-fructose 6-phosphate + L-glutamine = D-glucosamine 6-phosphate + L-glutamate. Functionally, catalyzes the first step in hexosamine metabolism, converting fructose-6P into glucosamine-6P using glutamine as a nitrogen source. The polypeptide is Glutamine--fructose-6-phosphate aminotransferase [isomerizing] (Helicobacter pylori (strain J99 / ATCC 700824) (Campylobacter pylori J99)).